Reading from the N-terminus, the 1034-residue chain is Isoleucine--tRNA ligase (1034 aa).

A 'HIGH' region motif is present at residues 46–56 (PYCSGAIHLGT). Residues 598–602 (KMSKS) carry the 'KMSKS' region motif. Lysine 601 contributes to the ATP binding site.

Belongs to the class-I aminoacyl-tRNA synthetase family. IleS type 2 subfamily. As to quaternary structure, monomer. It depends on Zn(2+) as a cofactor.

It is found in the cytoplasm. The enzyme catalyses tRNA(Ile) + L-isoleucine + ATP = L-isoleucyl-tRNA(Ile) + AMP + diphosphate. Catalyzes the attachment of isoleucine to tRNA(Ile). As IleRS can inadvertently accommodate and process structurally similar amino acids such as valine, to avoid such errors it has two additional distinct tRNA(Ile)-dependent editing activities. One activity is designated as 'pretransfer' editing and involves the hydrolysis of activated Val-AMP. The other activity is designated 'posttransfer' editing and involves deacylation of mischarged Val-tRNA(Ile). The protein is Isoleucine--tRNA ligase of Methanococcus maripaludis (strain DSM 14266 / JCM 13030 / NBRC 101832 / S2 / LL).